Here is a 305-residue protein sequence, read N- to C-terminus: 17-beta-hydroxysteroid dehydrogenase type 3 (305 aa).

44–73 (GQWAVITGAGDGIGKAYSFELARHGLNVVL) contacts NADP(+). Serine 181 lines the substrate pocket. Tyrosine 194 serves as the catalytic Proton acceptor.

The protein belongs to the short-chain dehydrogenases/reductases (SDR) family. 17-beta-HSD 3 subfamily. As to expression, expressed in the testes.

The protein localises to the endoplasmic reticulum. It carries out the reaction a 17beta-hydroxy steroid + NADP(+) = a 17-oxo steroid + NADPH + H(+). It catalyses the reaction testosterone + NADP(+) = androst-4-ene-3,17-dione + NADPH + H(+). The enzyme catalyses 17beta-estradiol + NADP(+) = estrone + NADPH + H(+). The catalysed reaction is 3beta-hydroxyandrost-5-en-17-one + NADPH + H(+) = androst-5-en-3beta,17beta-diol + NADP(+). It carries out the reaction 17beta-hydroxy-5alpha-androstan-3-one + NADP(+) = 5alpha-androstan-3,17-dione + NADPH + H(+). It catalyses the reaction androsterone + NADPH + H(+) = 5alpha-androstane-3alpha,17beta-diol + NADP(+). The enzyme catalyses 3beta-hydroxy-5alpha-androstan-17-one + NADPH + H(+) = 5alpha-androstane-3beta,17beta-diol + NADP(+). The catalysed reaction is androst-4-ene-3,11,17-trione + NADPH + H(+) = 17beta-hydroxyandrost-4-ene-3,11-dione + NADP(+). It carries out the reaction 11beta-hydroxyandrost-4-ene-3,17-dione + NADPH + H(+) = 11beta,17beta-dihydroxyandrost-4-ene-3-one + NADP(+). It participates in hormone biosynthesis; testosterone biosynthesis. The protein operates within steroid metabolism. Functionally, catalyzes the conversion of 17-oxosteroids to 17beta-hydroxysteroids. Favors the reduction of androstenedione to testosterone. Testosterone is the key androgen driving male development and function. Uses NADPH while the two other EDH17B enzymes use NADH. Androgens such as epiandrosterone, dehydroepiandrosterone, androsterone and androstanedione are accepted as substrates and reduced at C-17. Can reduce 11-ketoandrostenedione as well as 11beta-hydroxyandrostenedione at C-17 to the respective testosterone forms. Plays a role in the rate-limiting-step for the maximum level of testosterone production by the testis but does not affect basal testosterone production. The chain is 17-beta-hydroxysteroid dehydrogenase type 3 from Mus musculus (Mouse).